Consider the following 197-residue polypeptide: Segregation and condensation protein B (197 aa).

The protein belongs to the ScpB family. In terms of assembly, homodimer. Homodimerization may be required to stabilize the binding of ScpA to the Smc head domains. Component of a cohesin-like complex composed of ScpA, ScpB and the Smc homodimer, in which ScpA and ScpB bind to the head domain of Smc. The presence of the three proteins is required for the association of the complex with DNA.

The protein resides in the cytoplasm. Functionally, participates in chromosomal partition during cell division. May act via the formation of a condensin-like complex containing Smc and ScpA that pull DNA away from mid-cell into both cell halves. The sequence is that of Segregation and condensation protein B from Bacillus pumilus (strain SAFR-032).